Reading from the N-terminus, the 61-residue chain is Large ribosomal subunit protein uL30 (61 aa).

The protein belongs to the universal ribosomal protein uL30 family. In terms of assembly, part of the 50S ribosomal subunit.

The polypeptide is Large ribosomal subunit protein uL30 (Oenococcus oeni (strain ATCC BAA-331 / PSU-1)).